We begin with the raw amino-acid sequence, 275 residues long: uncharacterized protein (275 aa).

This is an uncharacterized protein from Enterobacteria phage T4 (Bacteriophage T4).